A 504-amino-acid polypeptide reads, in one-letter code: O-fucosyltransferase 39 (504 aa).

Residues 11–27 (WILSMFFFVVLFCNNVS) traverse the membrane as a helical; Signal-anchor for type II membrane protein segment. Residue Asn115 is glycosylated (N-linked (GlcNAc...) asparagine). Position 288–290 (288–290 (HLR)) interacts with substrate. 2 N-linked (GlcNAc...) asparagine glycosylation sites follow: Asn359 and Asn460.

It belongs to the glycosyltransferase GT106 family.

The protein localises to the membrane. It participates in glycan metabolism. The protein is O-fucosyltransferase 39 of Arabidopsis thaliana (Mouse-ear cress).